The sequence spans 301 residues: Pyridoxal 5'-phosphate synthase subunit PdxS (301 aa).

Asp31 provides a ligand contact to D-ribose 5-phosphate. The active-site Schiff-base intermediate with D-ribose 5-phosphate is Lys88. A D-ribose 5-phosphate-binding site is contributed by Gly160. D-glyceraldehyde 3-phosphate is bound at residue Lys172. Residues Gly221 and 242–243 (GS) each bind D-ribose 5-phosphate.

The protein belongs to the PdxS/SNZ family. In the presence of PdxT, forms a dodecamer of heterodimers.

It carries out the reaction aldehydo-D-ribose 5-phosphate + D-glyceraldehyde 3-phosphate + L-glutamine = pyridoxal 5'-phosphate + L-glutamate + phosphate + 3 H2O + H(+). Its pathway is cofactor biosynthesis; pyridoxal 5'-phosphate biosynthesis. Catalyzes the formation of pyridoxal 5'-phosphate from ribose 5-phosphate (RBP), glyceraldehyde 3-phosphate (G3P) and ammonia. The ammonia is provided by the PdxT subunit. Can also use ribulose 5-phosphate and dihydroxyacetone phosphate as substrates, resulting from enzyme-catalyzed isomerization of RBP and G3P, respectively. The sequence is that of Pyridoxal 5'-phosphate synthase subunit PdxS from Methanosarcina mazei (strain ATCC BAA-159 / DSM 3647 / Goe1 / Go1 / JCM 11833 / OCM 88) (Methanosarcina frisia).